The sequence spans 277 residues: MFMKSLIKLIVFIVLCSLFLHSICGERTIAEMSITYKLTGEITNTNPYSIFVAVPSNITFEEKTLPKPEDFLDVSTSVTQTSGIVFYKTIFNGKEGFWIPPYTTVKINIYHYTPITYDIKIDESQENYDVVGPAVVNKVNVIDLNKLFPDAKYEGIKIGKFKLYVSGYIVKGNDTESLSIIVPAPLVIDNYDEFHKFGDDNVDIWISSYNEWYKNQMERENIHIDNNDPLIPKMDNDVLGDDTHFKFKIFDVPAMAFTTSSNQPIRFYYIIYYKYNN.

This is an uncharacterized protein from Methanocaldococcus jannaschii (strain ATCC 43067 / DSM 2661 / JAL-1 / JCM 10045 / NBRC 100440) (Methanococcus jannaschii).